A 200-amino-acid polypeptide reads, in one-letter code: Probable molybdenum cofactor guanylyltransferase (200 aa).

Residues 9-11, lysine 21, aspartate 69, and aspartate 100 contribute to the GTP site; that span reads LAG. Aspartate 100 is a Mg(2+) binding site.

Belongs to the MobA family. The cofactor is Mg(2+).

It localises to the cytoplasm. It carries out the reaction Mo-molybdopterin + GTP + H(+) = Mo-molybdopterin guanine dinucleotide + diphosphate. In terms of biological role, transfers a GMP moiety from GTP to Mo-molybdopterin (Mo-MPT) cofactor (Moco or molybdenum cofactor) to form Mo-molybdopterin guanine dinucleotide (Mo-MGD) cofactor. The protein is Probable molybdenum cofactor guanylyltransferase of Bacillus cereus (strain AH820).